A 186-amino-acid polypeptide reads, in one-letter code: uncharacterized protein (186 aa).

Helical transmembrane passes span 5-25 (LIACLIINNLTLIHFVGFEDI), 39-59 (IITITSLLIYSISFYLYKLFA), 62-82 (NLLFLVPIFYVILIYVLILLF), and 122-142 (GFFEGLEILILSALGILIALM).

The protein localises to the cell membrane. This is an uncharacterized protein from Borreliella burgdorferi (strain ATCC 35210 / DSM 4680 / CIP 102532 / B31) (Borrelia burgdorferi).